A 57-amino-acid chain; its full sequence is UPF0391 membrane protein RPC_2356 (57 aa).

2 consecutive transmembrane segments (helical) span residues 6-26 and 35-55; these read WALI…TGIS and ILFY…LTIF.

This sequence belongs to the UPF0391 family.

The protein resides in the cell membrane. The sequence is that of UPF0391 membrane protein RPC_2356 from Rhodopseudomonas palustris (strain BisB18).